A 74-amino-acid polypeptide reads, in one-letter code: Exodeoxyribonuclease 7 small subunit (74 aa).

This sequence belongs to the XseB family. As to quaternary structure, heterooligomer composed of large and small subunits.

It is found in the cytoplasm. The enzyme catalyses Exonucleolytic cleavage in either 5'- to 3'- or 3'- to 5'-direction to yield nucleoside 5'-phosphates.. Functionally, bidirectionally degrades single-stranded DNA into large acid-insoluble oligonucleotides, which are then degraded further into small acid-soluble oligonucleotides. This chain is Exodeoxyribonuclease 7 small subunit, found in Symbiobacterium thermophilum (strain DSM 24528 / JCM 14929 / IAM 14863 / T).